Consider the following 364-residue polypeptide: Salivary endonuclease (364 aa).

An N-terminal signal peptide occupies residues 1-24; sequence MSSFFLSISPLVLALFHVVVQVCS. Asn-285 is a glycosylation site (N-linked (GlcNAc...) asparagine).

Belongs to the DNA/RNA non-specific endonuclease family. Requires Mg(2+) as cofactor. In terms of tissue distribution, saliva (at protein level). Female salivary gland.

It is found in the secreted. In terms of biological role, hydrolyzes double-stranded DNA with no sequence specificity. Does not cleave ssDNA and RNA. May facilitate blood meal intake by lowering the local viscosity created by the release of host DNA. This Culex quinquefasciatus (Southern house mosquito) protein is Salivary endonuclease.